Consider the following 418-residue polypeptide: AP-3 complex subunit mu-1 (418 aa).

Positions 176 to 417 (NNEAYFDVVE…VTKAGKFQVR (242 aa)) constitute an MHD domain.

The protein belongs to the adaptor complexes medium subunit family. In terms of assembly, adaptor protein complex 3 (AP-3) is a heterotetramer composed of two large adaptins (delta-type subunit AP3D1 and beta-type subunit AP3B1 or AP3B2), a medium adaptin (mu-type subunit AP3M1 or AP3M2) and a small adaptin (sigma-type subunit APS1 or AP3S2). Interacts with AGAP1. AP-3 associates with the BLOC-1 complex.

The protein resides in the golgi apparatus. Its subcellular location is the cytoplasmic vesicle membrane. Functionally, part of the AP-3 complex, an adaptor-related complex which is not clathrin-associated. The complex is associated with the Golgi region as well as more peripheral structures. It facilitates the budding of vesicles from the Golgi membrane and may be directly involved in trafficking to lysosomes. In concert with the BLOC-1 complex, AP-3 is required to target cargos into vesicles assembled at cell bodies for delivery into neurites and nerve terminals. This Bos taurus (Bovine) protein is AP-3 complex subunit mu-1 (AP3M1).